The primary structure comprises 953 residues: Eukaryotic translation initiation factor 3 subunit A (953 aa).

The 182-residue stretch at 323 to 504 (LQKMASHVLL…KSISFGLDLH (182 aa)) folds into the PCI domain. Coiled coils occupy residues 593-642 (QERE…KRQA), 670-704 (MNAD…VDYF), and 732-877 (ENQE…LEER). A disordered region spans residues 603–623 (IKKQKVENQEAEQKRLDEERR). Disordered stretches follow at residues 810–861 (ERKK…EIDR) and 893–953 (GWGD…ITMS). 3 stretches are compositionally biased toward basic and acidic residues: residues 812-861 (KKIE…EIDR), 895-919 (GDHE…RGGD), and 928-953 (WQRE…ITMS).

The protein belongs to the eIF-3 subunit A family. In terms of assembly, component of the eukaryotic translation initiation factor 3 (eIF-3) complex.

It is found in the cytoplasm. Functionally, RNA-binding component of the eukaryotic translation initiation factor 3 (eIF-3) complex, which is involved in protein synthesis of a specialized repertoire of mRNAs and, together with other initiation factors, stimulates binding of mRNA and methionyl-tRNAi to the 40S ribosome. The eIF-3 complex specifically targets and initiates translation of a subset of mRNAs involved in cell proliferation. This chain is Eukaryotic translation initiation factor 3 subunit A, found in Nematostella vectensis (Starlet sea anemone).